The following is a 384-amino-acid chain: Probable 2-heptyl-3-hydroxy-4(1H)-quinolone synthase AqdB2 (384 aa).

It belongs to the 3-hydroxybenzoate 6-hydroxylase family.

It carries out the reaction 2-heptyl-4(1H)-quinolone + NADH + O2 + H(+) = 2-heptyl-3-hydroxy-4(1H)-quinolone + NAD(+) + H2O. Its function is as follows. Involved in the degradation of the Pseudomonas aeruginosa quorum sensing signal molecule HHQ (2-heptyl-4-quinolone) to anthranilic acid. Probably catalyzes the hydroxylation of HHQ to PQS (2-heptyl-3-hydroxy-4-quinolone). The sequence is that of Probable 2-heptyl-3-hydroxy-4(1H)-quinolone synthase AqdB2 from Rhodococcus erythropolis (Arthrobacter picolinophilus).